The sequence spans 491 residues: Probable succinate-semialdehyde dehydrogenase [NADP(+)] (491 aa).

NADP(+)-binding positions include 163-164 (WN), 187-190 (KPAE), and 241-242 (GS). The active-site Proton acceptor is the glutamate 263. Leucine 264 contacts NADP(+). Residue cysteine 297 is the Nucleophile of the active site. Residue glutamate 394 participates in NADP(+) binding.

The protein belongs to the aldehyde dehydrogenase family.

It catalyses the reaction succinate semialdehyde + NADP(+) + H2O = succinate + NADPH + 2 H(+). Its pathway is amino-acid degradation; 4-aminobutanoate degradation. In terms of biological role, catalyzes the NADP(+) dependent oxidation of succinate semialdehyde to succinate. This chain is Probable succinate-semialdehyde dehydrogenase [NADP(+)] (gabD), found in Sinorhizobium fredii (strain NBRC 101917 / NGR234).